We begin with the raw amino-acid sequence, 204 residues long: Cytochrome c biogenesis ATP-binding export protein CcmA (204 aa).

The 202-residue stretch at 2-203 (LEADNLECVR…PAGTVRELRL (202 aa)) folds into the ABC transporter domain. 34–41 (GRNGAGKT) provides a ligand contact to ATP.

The protein belongs to the ABC transporter superfamily. CcmA exporter (TC 3.A.1.107) family. As to quaternary structure, the complex is composed of two ATP-binding proteins (CcmA) and two transmembrane proteins (CcmB).

The protein localises to the cell inner membrane. The catalysed reaction is heme b(in) + ATP + H2O = heme b(out) + ADP + phosphate + H(+). Part of the ABC transporter complex CcmAB involved in the biogenesis of c-type cytochromes; once thought to export heme, this seems not to be the case, but its exact role is uncertain. Responsible for energy coupling to the transport system. In Dechloromonas aromatica (strain RCB), this protein is Cytochrome c biogenesis ATP-binding export protein CcmA.